The chain runs to 100 residues: Urease subunit gamma 1 (100 aa).

The protein belongs to the urease gamma subunit family. Heterotrimer of UreA (gamma), UreB (beta) and UreC (alpha) subunits. Three heterotrimers associate to form the active enzyme.

The protein resides in the cytoplasm. The catalysed reaction is urea + 2 H2O + H(+) = hydrogencarbonate + 2 NH4(+). The protein operates within nitrogen metabolism; urea degradation; CO(2) and NH(3) from urea (urease route): step 1/1. Its function is as follows. Disruption of the ure1 gene cluster suggests that it protects brucellae during their passage through the stomach. The major route of infection in human brucellosis is oral. The protein is Urease subunit gamma 1 of Brucella abortus (strain 2308).